A 556-amino-acid chain; its full sequence is Formate--tetrahydrofolate ligase (556 aa).

ATP is bound at residue 65–72 (TPAGEGKT).

The protein belongs to the formate--tetrahydrofolate ligase family.

The enzyme catalyses (6S)-5,6,7,8-tetrahydrofolate + formate + ATP = (6R)-10-formyltetrahydrofolate + ADP + phosphate. The protein operates within one-carbon metabolism; tetrahydrofolate interconversion. The sequence is that of Formate--tetrahydrofolate ligase from Agathobacter rectalis (strain ATCC 33656 / DSM 3377 / JCM 17463 / KCTC 5835 / VPI 0990) (Eubacterium rectale).